We begin with the raw amino-acid sequence, 151 residues long: Deoxyuridine 5'-triphosphate nucleotidohydrolase (151 aa).

Residues 70-72, Asn83, 87-89, and Met97 contribute to the substrate site; these read RSG and LID.

The protein belongs to the dUTPase family. Requires Mg(2+) as cofactor.

It carries out the reaction dUTP + H2O = dUMP + diphosphate + H(+). The protein operates within pyrimidine metabolism; dUMP biosynthesis; dUMP from dCTP (dUTP route): step 2/2. This enzyme is involved in nucleotide metabolism: it produces dUMP, the immediate precursor of thymidine nucleotides and it decreases the intracellular concentration of dUTP so that uracil cannot be incorporated into DNA. The polypeptide is Deoxyuridine 5'-triphosphate nucleotidohydrolase (Pseudomonas aeruginosa (strain LESB58)).